The primary structure comprises 135 residues: uncharacterized protein (135 aa).

This is an uncharacterized protein from Magallana gigas (Pacific oyster).